The sequence spans 398 residues: Isochorismate synthase DhbC (398 aa).

At Ser271 the chain carries Phosphoserine.

This sequence belongs to the isochorismate synthase family.

The catalysed reaction is chorismate = isochorismate. It functions in the pathway siderophore biosynthesis; bacillibactin biosynthesis. The polypeptide is Isochorismate synthase DhbC (dhbC) (Bacillus subtilis (strain 168)).